Consider the following 274-residue polypeptide: Shikimate dehydrogenase (NADP(+)) (274 aa).

Shikimate contacts are provided by residues 15–17 (SKS) and Thr62. Catalysis depends on Lys66, which acts as the Proton acceptor. Asp78 is a binding site for NADP(+). Residues Asn87 and Asp102 each contribute to the shikimate site. NADP(+)-binding positions include 127 to 131 (GAGGA) and Met215. Tyr217 is a shikimate binding site. Residue Gly239 coordinates NADP(+).

It belongs to the shikimate dehydrogenase family. As to quaternary structure, homodimer.

The enzyme catalyses shikimate + NADP(+) = 3-dehydroshikimate + NADPH + H(+). Its pathway is metabolic intermediate biosynthesis; chorismate biosynthesis; chorismate from D-erythrose 4-phosphate and phosphoenolpyruvate: step 4/7. Functionally, involved in the biosynthesis of the chorismate, which leads to the biosynthesis of aromatic amino acids. Catalyzes the reversible NADPH linked reduction of 3-dehydroshikimate (DHSA) to yield shikimate (SA). In Dechloromonas aromatica (strain RCB), this protein is Shikimate dehydrogenase (NADP(+)).